Reading from the N-terminus, the 314-residue chain is Malate dehydrogenase (314 aa).

Residues 11–16 and Asp35 contribute to the NAD(+) site; that span reads GSGNIG. Substrate contacts are provided by Arg84 and Arg90. NAD(+) is bound by residues Asn97 and 120–122; that span reads ITN. The substrate site is built by Asn122 and Arg153. Residue His177 is the Proton acceptor of the active site.

It belongs to the LDH/MDH superfamily. MDH type 3 family.

The catalysed reaction is (S)-malate + NAD(+) = oxaloacetate + NADH + H(+). Functionally, catalyzes the reversible oxidation of malate to oxaloacetate. This Rickettsia typhi (strain ATCC VR-144 / Wilmington) protein is Malate dehydrogenase.